Here is a 393-residue protein sequence, read N- to C-terminus: Serpin-Z4 (393 aa).

The interval 342 to 366 is RCL; that stretch reads GTEAAAVSVASMTKDMLLMGDFVAD.

The protein belongs to the serpin family.

In terms of biological role, probable serine protease inhibitor. The chain is Serpin-Z4 from Arabidopsis thaliana (Mouse-ear cress).